Here is a 267-residue protein sequence, read N- to C-terminus: MLLVLIDVDGFMGQLYNENGTQTILIPREVVIFYWEKNTASKILQLFFHGGIDPIFEKINQRSFSFQSRHIHHFTLDESPLPNSIALPTDTLQAFKAGKKMIFQHLVKITKDHEQILLLHKGGPEGEWVRSFNIPNATVQNLNDLCCPSVEKLVLKKRDYISSSIGCPKHIQGSNHCPVFECHVLFKWIQENTSIVQGVLKRPSLPYEEAVLFIEHRINMVDNHPFKKDSVKQNQKKKNWIATQFVQHGIYVDNGILSKIYNKYSLF.

The protein belongs to the asfivirus I267L family. As to quaternary structure, interacts with host RNF135.

In terms of biological role, plays a role in the inhibition of host RNA Pol-III-RIGI-mediated innate antiviral response. Mechanistically, interacts with host E3 ubiquitin ligase RNF135, disrupting RNF135-RIGI interaction and impairing RNF135-mediated 'Lys-63'-polyubiquitination and activation of RIGI. The polypeptide is Protein I267L (African swine fever virus (strain Badajoz 1971 Vero-adapted) (Ba71V)).